Here is a 315-residue protein sequence, read N- to C-terminus: Periplasmic [NiFeSe] hydrogenase small subunit (315 aa).

A signal peptide (tat-type signal) is located at residues 1-32 (MSLSRREFVKLCSAGVAGLGISQIYHPGIVHA). Residues Cys-50, Cys-53, Cys-158, Cys-196, His-240, Cys-243, Cys-263, Cys-269, Cys-278, Cys-290, Cys-296, and Cys-299 each contribute to the [4Fe-4S] cluster site.

The protein belongs to the [NiFe]/[NiFeSe] hydrogenase small subunit family. In terms of assembly, heterodimer of a large and a small subunit. [4Fe-4S] cluster is required as a cofactor. In terms of processing, predicted to be exported by the Tat system. The position of the signal peptide cleavage has been experimentally proven.

It is found in the periplasm. The enzyme catalyses H2 + A = AH2. This is Periplasmic [NiFeSe] hydrogenase small subunit from Desulfomicrobium baculatum (Desulfovibrio baculatus).